Reading from the N-terminus, the 197-residue chain is Protein GrpE (197 aa).

The segment at 1–39 is disordered; sequence MSSKEQKTPEGQAPEEIIMDQHEEIEAVEPEASAEQVDP.

The protein belongs to the GrpE family. Homodimer.

Its subcellular location is the cytoplasm. In terms of biological role, participates actively in the response to hyperosmotic and heat shock by preventing the aggregation of stress-denatured proteins, in association with DnaK and GrpE. It is the nucleotide exchange factor for DnaK and may function as a thermosensor. Unfolded proteins bind initially to DnaJ; upon interaction with the DnaJ-bound protein, DnaK hydrolyzes its bound ATP, resulting in the formation of a stable complex. GrpE releases ADP from DnaK; ATP binding to DnaK triggers the release of the substrate protein, thus completing the reaction cycle. Several rounds of ATP-dependent interactions between DnaJ, DnaK and GrpE are required for fully efficient folding. This is Protein GrpE from Escherichia coli O127:H6 (strain E2348/69 / EPEC).